The chain runs to 342 residues: Strictosidine synthase (342 aa).

A signal peptide spans 1–20 (KLSDSQTMALFTVFLLFLSS). N-linked (GlcNAc...) asparagine glycosylation is present at asparagine 89.

This sequence belongs to the strictosidine synthase family. As to quaternary structure, monomer.

The protein localises to the vacuole. The enzyme catalyses 3alpha(S)-strictosidine + H2O = secologanin + tryptamine. It functions in the pathway alkaloid biosynthesis; 3alpha(S)-strictosidine biosynthesis; 3alpha(S)-strictosidine from secologanin and tryptamine: step 1/1. Its function is as follows. Catalyzes the stereospecific condensation of tryptamine with secologanin to form strictosidine, the key intermediate of indole alkaloid biosynthesis. In Rauvolfia mannii, this protein is Strictosidine synthase (STR1).